Consider the following 267-residue polypeptide: Small ribosomal subunit protein uS3 (267 aa).

The region spanning 43–111 is the KH type-2 domain; sequence IRKEMSKDLE…QVQLNIFEVK (69 aa). Positions 216–267 are disordered; sequence FEEQQAQQNNRPGRRGGDRRPRRGNRSAAPQAAEAPKAEAPAEAAPAAETKE. A compositionally biased stretch (low complexity) spans 241-267; sequence RSAAPQAAEAPKAEAPAEAAPAAETKE.

Belongs to the universal ribosomal protein uS3 family. In terms of assembly, part of the 30S ribosomal subunit. Forms a tight complex with proteins S10 and S14.

In terms of biological role, binds the lower part of the 30S subunit head. Binds mRNA in the 70S ribosome, positioning it for translation. In Bifidobacterium longum (strain DJO10A), this protein is Small ribosomal subunit protein uS3.